A 290-amino-acid chain; its full sequence is Shikimate dehydrogenase (NADP(+)) (290 aa).

Shikimate contacts are provided by residues 18–20 (SYS) and Thr66. The Proton acceptor role is filled by Lys70. Shikimate contacts are provided by Asn91 and Asp106. Residues 130–134 (GNGGA) and Met230 each bind NADP(+). Tyr232 contributes to the shikimate binding site. Gly253 is a binding site for NADP(+).

Belongs to the shikimate dehydrogenase family. As to quaternary structure, homodimer.

It catalyses the reaction shikimate + NADP(+) = 3-dehydroshikimate + NADPH + H(+). It participates in metabolic intermediate biosynthesis; chorismate biosynthesis; chorismate from D-erythrose 4-phosphate and phosphoenolpyruvate: step 4/7. Functionally, involved in the biosynthesis of the chorismate, which leads to the biosynthesis of aromatic amino acids. Catalyzes the reversible NADPH linked reduction of 3-dehydroshikimate (DHSA) to yield shikimate (SA). The protein is Shikimate dehydrogenase (NADP(+)) of Prosthecochloris aestuarii (strain DSM 271 / SK 413).